The following is a 553-amino-acid chain: CTP synthase (553 aa).

The interval 1-266 is amidoligase domain; sequence MTKNYIFITG…DNYICEYFKL (266 aa). Residue serine 14 coordinates CTP. Serine 14 is a binding site for UTP. ATP-binding positions include 15–20 and aspartate 72; that span reads SLGKGI. 2 residues coordinate Mg(2+): aspartate 72 and glutamate 140. CTP-binding positions include 147 to 149, 187 to 192, and lysine 223; these read DIE and KTKPTQ. Residues 187–192 and lysine 223 contribute to the UTP site; that span reads KTKPTQ. 239-241 serves as a coordination point for ATP; sequence KDV. Positions 291-544 constitute a Glutamine amidotransferase type-1 domain; the sequence is IIGIIGKYIK…IKSAKKNKKN (254 aa). An L-glutamine-binding site is contributed by glycine 352. Cysteine 379 serves as the catalytic Nucleophile; for glutamine hydrolysis. L-glutamine contacts are provided by residues 380 to 383, glutamate 403, and arginine 472; that span reads LGMQ. Residues histidine 517 and glutamate 519 contribute to the active site.

It belongs to the CTP synthase family. In terms of assembly, homotetramer.

It carries out the reaction UTP + L-glutamine + ATP + H2O = CTP + L-glutamate + ADP + phosphate + 2 H(+). It catalyses the reaction L-glutamine + H2O = L-glutamate + NH4(+). The catalysed reaction is UTP + NH4(+) + ATP = CTP + ADP + phosphate + 2 H(+). It participates in pyrimidine metabolism; CTP biosynthesis via de novo pathway; CTP from UDP: step 2/2. With respect to regulation, allosterically activated by GTP, when glutamine is the substrate; GTP has no effect on the reaction when ammonia is the substrate. The allosteric effector GTP functions by stabilizing the protein conformation that binds the tetrahedral intermediate(s) formed during glutamine hydrolysis. Inhibited by the product CTP, via allosteric rather than competitive inhibition. Catalyzes the ATP-dependent amination of UTP to CTP with either L-glutamine or ammonia as the source of nitrogen. Regulates intracellular CTP levels through interactions with the four ribonucleotide triphosphates. The chain is CTP synthase from Buchnera aphidicola subsp. Schizaphis graminum (strain Sg).